Here is a 244-residue protein sequence, read N- to C-terminus: U11/U12 small nuclear ribonucleoprotein 35 kDa protein (244 aa).

An RRM domain is found at 51-129; that stretch reads LTLFVARLNS…HEIFVDYELE (79 aa). A compositionally biased stretch (basic and acidic residues) spans 146 to 162; that stretch reads GKKESGQLRFGGRDRPF. The tract at residues 146–244 is disordered; sequence GKKESGQLRF…KTRDKRDRSK (99 aa). K172 is covalently cross-linked (Glycyl lysine isopeptide (Lys-Gly) (interchain with G-Cter in SUMO2)). Basic and acidic residues-rich tracts occupy residues 173-185 and 192-244; these read NEPH…ERRE and RHWD…DRSK.

Component of the U11/U12 snRNPs that are part of the U12-type spliceosome.

The protein localises to the nucleus. This chain is U11/U12 small nuclear ribonucleoprotein 35 kDa protein (Snrnp35), found in Rattus norvegicus (Rat).